The sequence spans 514 residues: Respiratory nitrate reductase 2 beta chain (514 aa).

4Fe-4S ferredoxin-type domains follow at residues 7–35, 174–205, and 207–236; these read VGMVLNLDKCIGCHTCSVTCKNVWTGREG, TFMMYLPRLCEHCLNPSCVATCPSGAIYKREE, and GIVLIDQDKCRGWRLCISGCPYKKIYFNWK. [4Fe-4S] cluster contacts are provided by Cys-16, Cys-19, Cys-22, Cys-26, Cys-183, Cys-186, and Cys-191. Residues Cys-195, Cys-216, and Cys-222 each contribute to the [3Fe-4S] cluster site. Positions 226, 243, 246, 258, and 262 each coordinate [4Fe-4S] cluster.

Dimer of heterotrimers each composed of an alpha, a beta and a gamma chain. Alpha and beta are catalytic chains; gamma chains are involved in binding the enzyme complex to the cytoplasmic membrane. The cofactor is [4Fe-4S] cluster. It depends on [3Fe-4S] cluster as a cofactor.

The protein resides in the cell membrane. The catalysed reaction is nitrate + a quinol = a quinone + nitrite + H2O. In terms of biological role, this is a second nitrate reductase enzyme which can substitute for the NRA enzyme and allows E.coli to use nitrate as an electron acceptor during anaerobic growth. The beta chain is an electron transfer unit containing four cysteine clusters involved in the formation of iron-sulfur centers. Electrons are transferred from the gamma chain to the molybdenum cofactor of the alpha subunit. The protein is Respiratory nitrate reductase 2 beta chain (narY) of Escherichia coli (strain K12).